Consider the following 156-residue polypeptide: Small ribosomal subunit protein uS7 (156 aa).

It belongs to the universal ribosomal protein uS7 family. In terms of assembly, part of the 30S ribosomal subunit. Contacts proteins S9 and S11.

Its function is as follows. One of the primary rRNA binding proteins, it binds directly to 16S rRNA where it nucleates assembly of the head domain of the 30S subunit. Is located at the subunit interface close to the decoding center, probably blocks exit of the E-site tRNA. In Paenarthrobacter aurescens (strain TC1), this protein is Small ribosomal subunit protein uS7.